A 324-amino-acid polypeptide reads, in one-letter code: Beta-ketoacyl-[acyl-carrier-protein] synthase III (324 aa).

Active-site residues include cysteine 112 and histidine 249. Positions 250–254 (QANRR) are ACP-binding. Residue asparagine 279 is part of the active site.

The protein belongs to the thiolase-like superfamily. FabH family. As to quaternary structure, homodimer.

The protein resides in the cytoplasm. The enzyme catalyses malonyl-[ACP] + acetyl-CoA + H(+) = 3-oxobutanoyl-[ACP] + CO2 + CoA. It participates in lipid metabolism; fatty acid biosynthesis. Catalyzes the condensation reaction of fatty acid synthesis by the addition to an acyl acceptor of two carbons from malonyl-ACP. Catalyzes the first condensation reaction which initiates fatty acid synthesis and may therefore play a role in governing the total rate of fatty acid production. Possesses both acetoacetyl-ACP synthase and acetyl transacylase activities. Its substrate specificity determines the biosynthesis of branched-chain and/or straight-chain of fatty acids. This is Beta-ketoacyl-[acyl-carrier-protein] synthase III from Streptococcus pyogenes serotype M49 (strain NZ131).